The primary structure comprises 153 residues: 6,7-dimethyl-8-ribityllumazine synthase (153 aa).

Residues F22, 56-58 (AFE), and 80-82 (AVI) contribute to the 5-amino-6-(D-ribitylamino)uracil site. 85–86 (ST) lines the (2S)-2-hydroxy-3-oxobutyl phosphate pocket. Catalysis depends on H88, which acts as the Proton donor. F113 serves as a coordination point for 5-amino-6-(D-ribitylamino)uracil. A (2S)-2-hydroxy-3-oxobutyl phosphate-binding site is contributed by R127.

Belongs to the DMRL synthase family.

It catalyses the reaction (2S)-2-hydroxy-3-oxobutyl phosphate + 5-amino-6-(D-ribitylamino)uracil = 6,7-dimethyl-8-(1-D-ribityl)lumazine + phosphate + 2 H2O + H(+). Its pathway is cofactor biosynthesis; riboflavin biosynthesis; riboflavin from 2-hydroxy-3-oxobutyl phosphate and 5-amino-6-(D-ribitylamino)uracil: step 1/2. In terms of biological role, catalyzes the formation of 6,7-dimethyl-8-ribityllumazine by condensation of 5-amino-6-(D-ribitylamino)uracil with 3,4-dihydroxy-2-butanone 4-phosphate. This is the penultimate step in the biosynthesis of riboflavin. The protein is 6,7-dimethyl-8-ribityllumazine synthase of Fusobacterium nucleatum subsp. nucleatum (strain ATCC 25586 / DSM 15643 / BCRC 10681 / CIP 101130 / JCM 8532 / KCTC 2640 / LMG 13131 / VPI 4355).